The primary structure comprises 571 residues: Septation ring formation regulator EzrA (571 aa).

The Extracellular segment spans residues 1 to 3 (MYY). The chain crosses the membrane as a helical span at residues 4–22 (MLIGFIIVVIAVIGAGYIL). Topologically, residues 23 to 571 (KRKHYQRINE…ESKVSVDDIE (549 aa)) are cytoplasmic. Coiled coils occupy residues 248-298 (LAQM…DTLE), 326-374 (DALA…ASGE), 400-437 (KFAE…ERER), and 478-529 (RIAE…ENHF).

This sequence belongs to the EzrA family.

It is found in the cell membrane. Functionally, negative regulator of FtsZ ring formation; modulates the frequency and position of FtsZ ring formation. Inhibits FtsZ ring formation at polar sites. Interacts either with FtsZ or with one of its binding partners to promote depolymerization. The polypeptide is Septation ring formation regulator EzrA (Listeria monocytogenes serotype 4b (strain CLIP80459)).